The chain runs to 503 residues: D-alanine--D-alanyl carrier protein ligase (503 aa).

An ATP-binding site is contributed by 151–152 (TS). Residue aspartate 196 participates in D-alanine binding. 291–296 (NTYGPT) is an ATP binding site. D-alanine is bound at residue valine 300. ATP-binding positions include aspartate 382, 393–396 (YNGR), and lysine 491. Lysine 491 contributes to the D-alanine binding site.

This sequence belongs to the ATP-dependent AMP-binding enzyme family. DltA subfamily.

The protein resides in the cytoplasm. The enzyme catalyses holo-[D-alanyl-carrier protein] + D-alanine + ATP = D-alanyl-[D-alanyl-carrier protein] + AMP + diphosphate. The protein operates within cell wall biogenesis; lipoteichoic acid biosynthesis. Catalyzes the first step in the D-alanylation of lipoteichoic acid (LTA), the activation of D-alanine and its transfer onto the D-alanyl carrier protein (Dcp) DltC. In an ATP-dependent two-step reaction, forms a high energy D-alanyl-AMP intermediate, followed by transfer of the D-alanyl residue as a thiol ester to the phosphopantheinyl prosthetic group of the Dcp. D-alanylation of LTA plays an important role in modulating the properties of the cell wall in Gram-positive bacteria, influencing the net charge of the cell wall. In Bacillus anthracis (strain A0248), this protein is D-alanine--D-alanyl carrier protein ligase.